Consider the following 214-residue polypeptide: Probable transaldolase (214 aa).

Catalysis depends on K83, which acts as the Schiff-base intermediate with substrate.

Belongs to the transaldolase family. Type 3B subfamily.

The protein resides in the cytoplasm. It catalyses the reaction D-sedoheptulose 7-phosphate + D-glyceraldehyde 3-phosphate = D-erythrose 4-phosphate + beta-D-fructose 6-phosphate. It functions in the pathway carbohydrate degradation; pentose phosphate pathway; D-glyceraldehyde 3-phosphate and beta-D-fructose 6-phosphate from D-ribose 5-phosphate and D-xylulose 5-phosphate (non-oxidative stage): step 2/3. In terms of biological role, transaldolase is important for the balance of metabolites in the pentose-phosphate pathway. This chain is Probable transaldolase, found in Carboxydothermus hydrogenoformans (strain ATCC BAA-161 / DSM 6008 / Z-2901).